Here is a 151-residue protein sequence, read N- to C-terminus: MKYQQLENLESGWKWKYLVKKHREGELITRYIEASAAQEAVDLLLTLENEPVKVNDWIAKHMNPALVNRMKQTIRARRKRHFNAEHQHTRKKSIDLEFMVWQRLAGLAHRRGKTLSETIVQLIEDAEHKEKYANTMSSLKQDLQALLGKND.

This sequence belongs to the MatP family. Homodimer.

The protein localises to the cytoplasm. In terms of biological role, required for spatial organization of the terminus region of the chromosome (Ter macrodomain) during the cell cycle. Prevents early segregation of duplicated Ter macrodomains during cell division. Binds specifically to matS, which is a 13 bp signature motif repeated within the Ter macrodomain. The protein is Macrodomain Ter protein of Escherichia fergusonii (strain ATCC 35469 / DSM 13698 / CCUG 18766 / IAM 14443 / JCM 21226 / LMG 7866 / NBRC 102419 / NCTC 12128 / CDC 0568-73).